We begin with the raw amino-acid sequence, 158 residues long: Endoribonuclease YbeY (158 aa).

3 residues coordinate Zn(2+): His-124, His-128, and His-134.

Belongs to the endoribonuclease YbeY family. Zn(2+) serves as cofactor.

The protein resides in the cytoplasm. Its function is as follows. Single strand-specific metallo-endoribonuclease involved in late-stage 70S ribosome quality control and in maturation of the 3' terminus of the 16S rRNA. This Caldicellulosiruptor saccharolyticus (strain ATCC 43494 / DSM 8903 / Tp8T 6331) protein is Endoribonuclease YbeY.